We begin with the raw amino-acid sequence, 159 residues long: MKIKVGFGYDVHQLKEGRPMWLGGIQLEYTKGPDGHSDADVLIHAICDAILGAANMRDIGFHFANTDDRWKGVDSKVLLKEVCRMIREKGWEISNVDASLALEMPKINPHIERMQTALSEAMSIPVEDISIKATTNEKLGYVGREEGVNAYAVALLIKP.

Residues aspartate 10 and histidine 12 each coordinate a divalent metal cation. Residues aspartate 10 to histidine 12 and histidine 36 to serine 37 each bind 4-CDP-2-C-methyl-D-erythritol 2-phosphate. Histidine 44 is a binding site for a divalent metal cation. Residues aspartate 58–glycine 60, phenylalanine 63–aspartate 67, threonine 134–glutamate 137, and arginine 144 each bind 4-CDP-2-C-methyl-D-erythritol 2-phosphate.

Belongs to the IspF family. In terms of assembly, homotrimer. A divalent metal cation is required as a cofactor.

The catalysed reaction is 4-CDP-2-C-methyl-D-erythritol 2-phosphate = 2-C-methyl-D-erythritol 2,4-cyclic diphosphate + CMP. It functions in the pathway isoprenoid biosynthesis; isopentenyl diphosphate biosynthesis via DXP pathway; isopentenyl diphosphate from 1-deoxy-D-xylulose 5-phosphate: step 4/6. Involved in the biosynthesis of isopentenyl diphosphate (IPP) and dimethylallyl diphosphate (DMAPP), two major building blocks of isoprenoid compounds. Catalyzes the conversion of 4-diphosphocytidyl-2-C-methyl-D-erythritol 2-phosphate (CDP-ME2P) to 2-C-methyl-D-erythritol 2,4-cyclodiphosphate (ME-CPP) with a corresponding release of cytidine 5-monophosphate (CMP). This Cytophaga hutchinsonii (strain ATCC 33406 / DSM 1761 / CIP 103989 / NBRC 15051 / NCIMB 9469 / D465) protein is 2-C-methyl-D-erythritol 2,4-cyclodiphosphate synthase.